A 250-amino-acid chain; its full sequence is Anti-Pycsar protein Apyc1 (250 aa).

Positions 19–220 (YNNNALVKCN…AVQEMIMLMH (202 aa)) are beta-lactamase-like. Residues histidine 61, histidine 63, aspartate 65, histidine 66, histidine 146, aspartate 166, and histidine 220 each contribute to the Zn(2+) site.

Belongs to the anti-Pycsar protein Apyc1 family. In terms of assembly, homodimer. Zn(2+) serves as cofactor.

It catalyses the reaction 3',5'-cyclic CMP + H2O = CMP + H(+). It carries out the reaction 3',5'-cyclic UMP + H2O = UMP + H(+). In terms of biological role, counteracts the endogenous Pycsar antiviral defense system. Phosphodiesterase that enables metal-dependent hydrolysis of host cyclic nucleotide Pycsar defense signals such as cCMP and cUMP. The chain is Anti-Pycsar protein Apyc1 from Paenibacillus xerothermodurans.